Consider the following 395-residue polypeptide: Glutamate N-acetyltransferase (395 aa).

Substrate is bound by residues T146, K169, T180, E263, N390, and T395. The active-site Nucleophile is T180.

It belongs to the ArgJ family. Heterotetramer of two alpha and two beta chains.

The protein localises to the cytoplasm. The catalysed reaction is N(2)-acetyl-L-ornithine + L-glutamate = N-acetyl-L-glutamate + L-ornithine. It participates in amino-acid biosynthesis; L-arginine biosynthesis; L-ornithine and N-acetyl-L-glutamate from L-glutamate and N(2)-acetyl-L-ornithine (cyclic): step 1/1. Its function is as follows. Catalyzes the transfer of the acetyl group from N(2)-acetylornithine to glutamate, forming N-acetylglutamate and L-ornithine. The protein is Glutamate N-acetyltransferase of Methanosarcina mazei (strain ATCC BAA-159 / DSM 3647 / Goe1 / Go1 / JCM 11833 / OCM 88) (Methanosarcina frisia).